Consider the following 146-residue polypeptide: Multiple coagulation factor deficiency protein 2 (146 aa).

The first 26 residues, 1–26 (MTMRSLLRTPFLCGLLWAFCAPGARA), serve as a signal peptide directing secretion. An EF-hand 1 domain is found at 68–103 (SPQELQLHYFKMHDYDGNNLLDGLELSTAITHVHKE). Ca(2+) contacts are provided by Asp81, Asp83, Asn85, and Glu92. The residue at position 106 (Ser106) is a Phosphoserine. The region spanning 116–146 (ELINIIDGVLRDDDKNNDGYIDYAEFAKSLQ) is the EF-hand 2 domain. Positions 129, 131, 133, 135, and 140 each coordinate Ca(2+).

As to quaternary structure, interacts in a calcium-dependent manner with LMAN1.

The protein resides in the endoplasmic reticulum-Golgi intermediate compartment. It localises to the endoplasmic reticulum. Its subcellular location is the golgi apparatus. Functionally, the MCFD2-LMAN1 complex forms a specific cargo receptor for the ER-to-Golgi transport of selected proteins. Plays a role in the secretion of coagulation factors. This chain is Multiple coagulation factor deficiency protein 2 (MCFD2), found in Homo sapiens (Human).